We begin with the raw amino-acid sequence, 552 residues long: MERFLRKYNISGDYANATRTFLAISPQWTCSHLKRNCLSNGMCAKQNFERAMIAATDAEEPIKAFRLIELAKEAMYDRETVWLQCFKSFSQPYEEDIEGKIKRCGAQLLEDYRKSGMMEEAIKQSALINSERVRLDDSLSAIPYIYVPIKEGQIVNPTFISRYRQIAYYFYNPDAADDWIDPNLFGVRGQHHQIKREVERQINTCPYTGYKGGIFQVMYLPIQLINFLRMDDFAKHFNRYASMAIQQYLRVGYLEEIRYVQQLFGKVPSGEFPLHQMMLMRRDFPTRDRNIVEARVKRSGDENWQSWLLPMVLVREGLDQQEKWEWLLEYMDRKHICQLCYLKHSKQIQTCSVIDVRASELIGCSPFRTVKIEEHVGNEPVFKTKLIRDQQIGRIGDHYYTTSCYTGAEALVTTAIHIHRWIRGCGIWNDEGWQEGVFMLGRVLLRWELTKAQRSALLRLFCFVCYGYAPRADGTVPDWNNLGSFLDIILKGPELSEDEDERAYATMFEMVRCIITLCYAEKVHFAGFTAPACESGEVINLAARMSQMWMEY.

It belongs to the orbivirus non-structural protein NS1 family.

The polypeptide is Non-structural protein NS1 (Segment-5) (Antilocapra americana (Pronghorn)).